Reading from the N-terminus, the 241-residue chain is NLP effector protein 7 (241 aa).

Positions 1–19 (MHLCALLIAAAGVLASVRA) are cleaved as a signal peptide. The short motif at 105 to 115 (AIMYAWYFPKA) is the Conserved undecapeptide motif element. The Conserved heptapeptide motif motif lies at 125–131 (GSRHYWL). N-linked (GlcNAc...) asparagine glycosylation occurs at Asn144.

It belongs to the Necrosis inducing protein (NPP1) family.

The protein localises to the secreted. In terms of biological role, secreted effector that acts as a pathogen-associated molecular pattern (PAMP) recognized by the plant immune system. Induces necrosis in Nicotiana benthamiana leaves and can induce Phytophthora capsici resistance in Nicotiana benthamiana. Also significantly improves disease resistance of Arabidopsis thaliana to Hyaloperonospora arabidopsidis. causes an inhibition of plant growth which is typically associated with enhanced immunity when over-expressed in Arabidopsis. The protein is NLP effector protein 7 of Plasmopara viticola (Downy mildew of grapevine).